Here is a 122-residue protein sequence, read N- to C-terminus: Large ribosomal subunit protein uL14c (122 aa).

It belongs to the universal ribosomal protein uL14 family. In terms of assembly, part of the 50S ribosomal subunit.

The protein resides in the plastid. It is found in the chloroplast. Its function is as follows. Binds to 23S rRNA. The chain is Large ribosomal subunit protein uL14c from Populus alba (White poplar).